Reading from the N-terminus, the 192-residue chain is Phosphoheptose isomerase (192 aa).

Positions 37-192 constitute an SIS domain; the sequence is LADSFKQEGK…IQLVEKEMAK (156 aa). Position 52–54 (52–54) interacts with substrate; sequence NGG. 2 residues coordinate Zn(2+): histidine 61 and glutamate 65. Residues glutamate 65, 93–94, 119–121, serine 124, and glutamine 172 contribute to the substrate site; these read ND and STS. Zn(2+) is bound by residues glutamine 172 and histidine 180.

Belongs to the SIS family. GmhA subfamily. Homotetramer. The cofactor is Zn(2+).

Its subcellular location is the cytoplasm. The enzyme catalyses 2 D-sedoheptulose 7-phosphate = D-glycero-alpha-D-manno-heptose 7-phosphate + D-glycero-beta-D-manno-heptose 7-phosphate. Its pathway is carbohydrate biosynthesis; D-glycero-D-manno-heptose 7-phosphate biosynthesis; D-glycero-alpha-D-manno-heptose 7-phosphate and D-glycero-beta-D-manno-heptose 7-phosphate from sedoheptulose 7-phosphate: step 1/1. Its function is as follows. Catalyzes the isomerization of sedoheptulose 7-phosphate in D-glycero-D-manno-heptose 7-phosphate. The sequence is that of Phosphoheptose isomerase from Aeromonas salmonicida (strain A449).